The chain runs to 271 residues: Formamidopyrimidine-DNA glycosylase (271 aa).

Pro2 serves as the catalytic Schiff-base intermediate with DNA. Glu3 (proton donor) is an active-site residue. Catalysis depends on Lys58, which acts as the Proton donor; for beta-elimination activity. DNA contacts are provided by His92, Arg111, and Lys152. The segment at 237–271 adopts an FPG-type zinc-finger fold; it reads YVYGKVQKPCKICNNTITLIRQNGRSTYFCNACQN. Arg261 functions as the Proton donor; for delta-elimination activity in the catalytic mechanism.

This sequence belongs to the FPG family. Monomer. It depends on Zn(2+) as a cofactor.

The catalysed reaction is Hydrolysis of DNA containing ring-opened 7-methylguanine residues, releasing 2,6-diamino-4-hydroxy-5-(N-methyl)formamidopyrimidine.. The enzyme catalyses 2'-deoxyribonucleotide-(2'-deoxyribose 5'-phosphate)-2'-deoxyribonucleotide-DNA = a 3'-end 2'-deoxyribonucleotide-(2,3-dehydro-2,3-deoxyribose 5'-phosphate)-DNA + a 5'-end 5'-phospho-2'-deoxyribonucleoside-DNA + H(+). Involved in base excision repair of DNA damaged by oxidation or by mutagenic agents. Acts as a DNA glycosylase that recognizes and removes damaged bases. Has a preference for oxidized purines, such as 7,8-dihydro-8-oxoguanine (8-oxoG). Has AP (apurinic/apyrimidinic) lyase activity and introduces nicks in the DNA strand. Cleaves the DNA backbone by beta-delta elimination to generate a single-strand break at the site of the removed base with both 3'- and 5'-phosphates. The polypeptide is Formamidopyrimidine-DNA glycosylase (Wolbachia sp. subsp. Brugia malayi (strain TRS)).